Consider the following 585-residue polypeptide: MPVLSEDSGLHETLALLTSQLRPDSNHKEEMGFLRDVFSEKSLSYLMKIHEKLRYYERQSPTPVLHSAVALAEDVMEELQAASVHSDERELLQLLSTPHLRAVLMVHDTVAQKNFDPVLPPLPDNIDEDFDEESVKIVRLVKNKEPLGATIRRDEHSGAVVVARIMRGGAADRSGLVHVGDELREVNGIAVLHKRPDEISQILAQSQGSITLKIIPATQEEDRLKESKVFMRALFHYNPREDRAIPCQEAGLPFQRRQVLEVVSQDDPTWWQAKRVGDTNLRAGLIPSKGFQERRLSYRRAAGTLPSPQSLRKPPYDQPCDKETCDCEGYLKGHYVAGLRRSFRLGCRERLGGSQEGKMSSGAESPELLTYEEVARYQHQPGERPRLVVLIGSLGARLHELKQKVVAENPQHFGVAVPHTTRPRKSHEKEGVEYHFVSKQAFEADLHHNKFLEHGEYKENLYGTSLEAIQAVMAKNKVCLVDVEPEALKQLRTSEFKPYIIFVKPAIQEKRKTPPMSPACEDTAAPFDEQQQEMAASAAFIDRHYGHLVDAVLVKEDLQGAYSQLKVVLEKLSKDTHWVPVSWVR.

2 consecutive L27 domains span residues 6 to 60 (EDSG…ERQS) and 61 to 118 (PTPV…FDPV). One can recognise a PDZ domain in the interval 137 to 212 (IVRLVKNKEP…LAQSQGSITL (76 aa)). An SH3 domain is found at 226 to 296 (ESKVFMRALF…PSKGFQERRL (71 aa)). Residue serine 307 is modified to Phosphoserine. Positions 385–570 (PRLVVLIGSL…AYSQLKVVLE (186 aa)) constitute a Guanylate kinase-like domain.

The protein belongs to the MAGUK family. In terms of assembly, interacts with HTR2C; this interaction stabilizes the receptor at the plasma membrane and prevents the desensitization of the HTR2C receptor-mediated calcium response. Interacts with HTR2A. Interacts with HTR4. Interacts (via PDZ domain) with CADM1 (via C-terminus)Interacts (via PDZ domain) with CADM1; this interaction connects CADM1 with DLG1. Interacts (via Guanylate kinase-like domain) with PALS1. Interacts with DLG1 (via N-terminus); this interaction connects CADM1 with DLG1 and links CADM1 with the regulatory subunit of phosphoinositide-3-kinase (PI3K) by forming a multiprotein complex and participates in cell spreading. Expressed in retina (at protein level) at the subapical region (SAR) adjacent to adherens junctions at the OLM, and at the OPL.

The protein localises to the cell membrane. It localises to the apical cell membrane. The protein resides in the cell junction. Its subcellular location is the adherens junction. Its function is as follows. Participates in cell spreading through the phosphoinositide-3-kinase (PI3K) pathway by connecting CADM1 to DLG1 and the regulatory subunit of phosphoinositide-3-kinase (PI3K). Stabilizes HTR2C at the plasma membrane and prevents its desensitization. May participates in the maintenance of adherens junctions. The chain is MAGUK p55 subfamily member 3 from Homo sapiens (Human).